The chain runs to 186 residues: Acireductone dioxygenase (186 aa).

Residues histidine 103, histidine 105, glutamate 109, and histidine 147 each coordinate Fe(2+). The Ni(2+) site is built by histidine 103, histidine 105, glutamate 109, and histidine 147.

This sequence belongs to the acireductone dioxygenase (ARD) family. As to quaternary structure, monomer. Fe(2+) serves as cofactor. Requires Ni(2+) as cofactor.

The catalysed reaction is 1,2-dihydroxy-5-(methylsulfanyl)pent-1-en-3-one + O2 = 3-(methylsulfanyl)propanoate + CO + formate + 2 H(+). The enzyme catalyses 1,2-dihydroxy-5-(methylsulfanyl)pent-1-en-3-one + O2 = 4-methylsulfanyl-2-oxobutanoate + formate + 2 H(+). It participates in amino-acid biosynthesis; L-methionine biosynthesis via salvage pathway; L-methionine from S-methyl-5-thio-alpha-D-ribose 1-phosphate: step 5/6. Functionally, catalyzes 2 different reactions between oxygen and the acireductone 1,2-dihydroxy-3-keto-5-methylthiopentene (DHK-MTPene) depending upon the metal bound in the active site. Fe-containing acireductone dioxygenase (Fe-ARD) produces formate and 2-keto-4-methylthiobutyrate (KMTB), the alpha-ketoacid precursor of methionine in the methionine recycle pathway. Ni-containing acireductone dioxygenase (Ni-ARD) produces methylthiopropionate, carbon monoxide and formate, and does not lie on the methionine recycle pathway. This is Acireductone dioxygenase from Synechococcus sp. (strain CC9605).